Here is a 295-residue protein sequence, read N- to C-terminus: Oxidoreductase AN1597 (295 aa).

It belongs to the asaB hydroxylase/desaturase family.

Its pathway is secondary metabolite biosynthesis; terpenoid biosynthesis. Its function is as follows. Oxidoreductase; part of the gene cluster that mediates the biosynthesis of the diterpene ent-pimara-8(14),15-diene (PD). Within the cluster, the HMG-CoA reductase AN1593 functions in the mevalonate pathway, which produces isoprenoid precursors. The geranylgeranyl pyrophosphate (GGPP) synthase AN1592 is needed in the formation of GGPP, the precursor for diterpenes. Lastly, the pimaradiene synthase pbcA performs the 2 cyclization steps that convert GGPP to ent-pimara-8(14),15-diene. The putative roles of the remaining cluster enzymes in ent-pimara-8(14),15-diene biosynthesis is unclear. The cytochrome P450 monooxygenase AN1598, the glutathione S-transferase AN1595, the oxidoreductases AN1596 and AN1597 probably function as decorative enzymes. It is possible that in biological conditions the compound is oxidized to ent-pimara-8(14),15-dien-19-oic acid, which is a bioactive diterpene compound predominant in many plant extracts. This Emericella nidulans (strain FGSC A4 / ATCC 38163 / CBS 112.46 / NRRL 194 / M139) (Aspergillus nidulans) protein is Oxidoreductase AN1597.